The sequence spans 80 residues: D-alanyl carrier protein 1 (80 aa).

The region spanning 1-80 is the Carrier domain; it reads MTMDDTKATV…KIVAKVENLQ (80 aa). At serine 38 the chain carries O-(pantetheine 4'-phosphoryl)serine.

The protein belongs to the DltC family. In terms of processing, 4'-phosphopantetheine is transferred from CoA to a specific serine of apo-DCP.

It is found in the cytoplasm. Its pathway is cell wall biogenesis; lipoteichoic acid biosynthesis. Carrier protein involved in the D-alanylation of lipoteichoic acid (LTA). The loading of thioester-linked D-alanine onto DltC is catalyzed by D-alanine--D-alanyl carrier protein ligase DltA. The DltC-carried D-alanyl group is further transferred to cell membrane phosphatidylglycerol (PG) by forming an ester bond, probably catalyzed by DltD. D-alanylation of LTA plays an important role in modulating the properties of the cell wall in Gram-positive bacteria, influencing the net charge of the cell wall. The polypeptide is D-alanyl carrier protein 1 (Lactiplantibacillus plantarum (strain ATCC BAA-793 / NCIMB 8826 / WCFS1) (Lactobacillus plantarum)).